A 450-amino-acid chain; its full sequence is Phosphoglucosamine mutase (450 aa).

Ser101 functions as the Phosphoserine intermediate in the catalytic mechanism. Mg(2+) is bound by residues Ser101, Asp240, Asp242, and Asp244. A Phosphoserine modification is found at Ser101.

It belongs to the phosphohexose mutase family. Mg(2+) is required as a cofactor. Activated by phosphorylation.

It catalyses the reaction alpha-D-glucosamine 1-phosphate = D-glucosamine 6-phosphate. In terms of biological role, catalyzes the conversion of glucosamine-6-phosphate to glucosamine-1-phosphate. The chain is Phosphoglucosamine mutase from Streptococcus uberis (strain ATCC BAA-854 / 0140J).